The primary structure comprises 284 residues: L-ribulose-5-phosphate 3-epimerase UlaE (284 aa).

The protein belongs to the L-ribulose-5-phosphate 3-epimerase family.

The enzyme catalyses L-ribulose 5-phosphate = L-xylulose 5-phosphate. It participates in cofactor degradation; L-ascorbate degradation; D-xylulose 5-phosphate from L-ascorbate: step 3/4. Catalyzes the isomerization of L-xylulose-5-phosphate to L-ribulose-5-phosphate. Is involved in the anaerobic L-ascorbate utilization. The sequence is that of L-ribulose-5-phosphate 3-epimerase UlaE from Escherichia coli O157:H7 (strain EC4115 / EHEC).